Consider the following 239-residue polypeptide: Peptidyl-tRNA hydrolase (239 aa).

Y14 provides a ligand contact to tRNA. The active-site Proton acceptor is H19. TRNA-binding residues include F64, N66, and N112. The interval 186-239 is disordered; the sequence is RTAPPRPSTGTGRPPAKTPARAEEPPAPAASPAPATAPLPDARSPLQKLVDRFK. The span at 193 to 204 shows a compositional bias: low complexity; it reads STGTGRPPAKTP. A compositionally biased stretch (pro residues) spans 210–222; it reads PPAPAASPAPATA.

The protein belongs to the PTH family. As to quaternary structure, monomer.

It is found in the cytoplasm. The enzyme catalyses an N-acyl-L-alpha-aminoacyl-tRNA + H2O = an N-acyl-L-amino acid + a tRNA + H(+). In terms of biological role, hydrolyzes ribosome-free peptidyl-tRNAs (with 1 or more amino acids incorporated), which drop off the ribosome during protein synthesis, or as a result of ribosome stalling. Its function is as follows. Catalyzes the release of premature peptidyl moieties from peptidyl-tRNA molecules trapped in stalled 50S ribosomal subunits, and thus maintains levels of free tRNAs and 50S ribosomes. The chain is Peptidyl-tRNA hydrolase from Ruegeria pomeroyi (strain ATCC 700808 / DSM 15171 / DSS-3) (Silicibacter pomeroyi).